A 311-amino-acid chain; its full sequence is Cadmium, cobalt and zinc/H(+)-K(+) antiporter (311 aa).

Residues 1-12 (MGHNHNEGANKK) lie on the Extracellular side of the membrane. The chain crosses the membrane as a helical span at residues 13–33 (VLLISFIMITGYMIIEAIGGF). Residues 34–43 (LTNSLALLSD) lie on the Cytoplasmic side of the membrane. The chain crosses the membrane as a helical span at residues 44–64 (AGHMLSDSISLMVALIAFTLA). Topologically, residues 65-78 (EKKANHNKTFGYKR) are extracellular. The helical transmembrane segment at 79–99 (FEILAAVINGAALILISLYII) threads the bilayer. Topologically, residues 100–115 (YEAIERFSNPPKVATT) are cytoplasmic. Residues 116–136 (GMLTISIIGLVVNLLVAWIMM) traverse the membrane as a helical segment. The Extracellular portion of the chain corresponds to 137-157 (SGGDTKNNLNIRGAYLHVISD). The chain crosses the membrane as a helical span at residues 158 to 178 (MLGSVGAILAAILIIFFGWGW). Residues 179–311 (ADPLASIIVA…MEKQRDHHHH (133 aa)) lie on the Cytoplasmic side of the membrane.

This sequence belongs to the cation diffusion facilitator (CDF) transporter (TC 2.A.4) family. SLC30A subfamily.

The protein resides in the cell membrane. Involved in divalent cation and potassium homeostasis in the cell. Catalyzes the active efflux of zinc, cadmium and cobalt, in exchange for potassium and H(+) ions. The polypeptide is Cadmium, cobalt and zinc/H(+)-K(+) antiporter (czcD) (Bacillus subtilis (strain 168)).